We begin with the raw amino-acid sequence, 420 residues long: CinA-like protein (420 aa).

Belongs to the CinA family.

This chain is CinA-like protein, found in Geotalea uraniireducens (strain Rf4) (Geobacter uraniireducens).